Consider the following 175-residue polypeptide: Cytochrome c homolog (175 aa).

The Cytoplasmic segment spans residues 1–8 (MTGKELNK). A helical; Signal-anchor membrane pass occupies residues 9-29 (IVAAILFASLIAMIVGFIANI). At 30-175 (LYKPNLHVLH…LFLKNYVHDQ (146 aa)) the chain is on the periplasmic side. The heme c site is built by Cys-84, Cys-87, His-88, and Met-150.

It belongs to the cytochrome c family. In terms of processing, binds 1 heme c group covalently per subunit.

The protein localises to the cell membrane. In terms of biological role, may be involved in electron transfer from bc1 complex to aa3. The sequence is that of Cytochrome c homolog (cycM) from Rickettsia prowazekii (strain Madrid E).